Reading from the N-terminus, the 256-residue chain is tRNA (guanine-N(7)-)-methyltransferase (256 aa).

Glu-85, Glu-110, Asp-137, and Asp-159 together coordinate S-adenosyl-L-methionine. Asp-159 is a catalytic residue. Substrate is bound by residues Lys-163 and Asp-195.

The protein belongs to the class I-like SAM-binding methyltransferase superfamily. TrmB family.

It carries out the reaction guanosine(46) in tRNA + S-adenosyl-L-methionine = N(7)-methylguanosine(46) in tRNA + S-adenosyl-L-homocysteine. The protein operates within tRNA modification; N(7)-methylguanine-tRNA biosynthesis. Its function is as follows. Catalyzes the formation of N(7)-methylguanine at position 46 (m7G46) in tRNA. In Rhodopseudomonas palustris (strain HaA2), this protein is tRNA (guanine-N(7)-)-methyltransferase.